A 265-amino-acid chain; its full sequence is Expansin-like A2 (265 aa).

The N-terminal stretch at 1-21 (MLQGFLFLLSVVLLFSSSAAA) is a signal peptide. Positions 42 to 148 (SGACAYGSMA…RRVPCDYGNK (107 aa)) constitute an Expansin-like EG45 domain. N100 and N103 each carry an N-linked (GlcNAc...) asparagine glycan. Residues 162–244 (NYLAIKLLYQ…NWEAGKSYDA (83 aa)) enclose the Expansin-like CBD domain.

This sequence belongs to the expansin family. Expansin-like A subfamily.

Its subcellular location is the secreted. The polypeptide is Expansin-like A2 (EXLA2) (Arabidopsis thaliana (Mouse-ear cress)).